The chain runs to 56 residues: Large ribosomal subunit protein bL32 (56 aa).

Residues Met-1–His-37 are disordered. Residues Lys-7–Arg-16 show a composition bias toward basic residues. Positions Ala-21–Ala-31 are enriched in polar residues.

Belongs to the bacterial ribosomal protein bL32 family.

The polypeptide is Large ribosomal subunit protein bL32 (Shewanella loihica (strain ATCC BAA-1088 / PV-4)).